A 127-amino-acid chain; its full sequence is Gonadotropin subunit beta-1 (127 aa).

An N-terminal signal peptide occupies residues 1–22; that stretch reads MHLAVTALCLTLAPVLARASTS. 6 cysteine pairs are disulfide-bonded: C23–C71, C37–C86, C40–C124, C48–C102, C52–C104, and C107–C114. N-linked (GlcNAc...) asparagine glycosylation is found at N27 and N44.

It belongs to the glycoprotein hormones subunit beta family. As to quaternary structure, heterodimer of an alpha and a beta chain.

Its subcellular location is the secreted. Its function is as follows. Involved in gametogenesis and steroidogenesis. This Anguilla japonica (Japanese eel) protein is Gonadotropin subunit beta-1 (cgba).